The sequence spans 418 residues: uncharacterized protein (418 aa).

This is an uncharacterized protein from Saccharomyces cerevisiae (strain ATCC 204508 / S288c) (Baker's yeast).